Here is a 158-residue protein sequence, read N- to C-terminus: Transcription elongation factor GreA (158 aa).

A coiled-coil region spans residues 3–75 (TEKTYPMTQE…TQLENMIRNA (73 aa)).

Belongs to the GreA/GreB family.

Necessary for efficient RNA polymerase transcription elongation past template-encoded arresting sites. The arresting sites in DNA have the property of trapping a certain fraction of elongating RNA polymerases that pass through, resulting in locked ternary complexes. Cleavage of the nascent transcript by cleavage factors such as GreA or GreB allows the resumption of elongation from the new 3'terminus. GreA releases sequences of 2 to 3 nucleotides. The polypeptide is Transcription elongation factor GreA (Bacillus cytotoxicus (strain DSM 22905 / CIP 110041 / 391-98 / NVH 391-98)).